Consider the following 185-residue polypeptide: Elongation factor P (185 aa).

It belongs to the elongation factor P family.

It localises to the cytoplasm. It participates in protein biosynthesis; polypeptide chain elongation. Its function is as follows. Involved in peptide bond synthesis. Stimulates efficient translation and peptide-bond synthesis on native or reconstituted 70S ribosomes in vitro. Probably functions indirectly by altering the affinity of the ribosome for aminoacyl-tRNA, thus increasing their reactivity as acceptors for peptidyl transferase. The chain is Elongation factor P from Paraburkholderia phymatum (strain DSM 17167 / CIP 108236 / LMG 21445 / STM815) (Burkholderia phymatum).